Reading from the N-terminus, the 158-residue chain is E3 ubiquitin ligase complex SCF subunit sconC (158 aa).

Residues 100-158 form an interaction with the F-box domain of F-box proteins region; that stretch reads ILAANYLDIKALLDVGCKTVANMIKGKSPEEIRKTFNIQNDFTPEEEDQIRRENEWAEE.

It belongs to the SKP1 family. In terms of assembly, component of the SCF (SKP1-CUL1-F-box protein) E3 ubiquitin ligase complexes.

It functions in the pathway protein modification; protein ubiquitination. In terms of biological role, essential component of the SCF (SKP1-CUL1-F-box protein) E3 ubiquitin ligase complexes, which mediate the ubiquitination and subsequent proteasomal degradation of target proteins. Controls sulfur metabolite repression, probably by mediating the inactivation or degradation of the metR transcription factor. This is E3 ubiquitin ligase complex SCF subunit sconC (sconC) from Aspergillus fumigatus (strain CBS 144.89 / FGSC A1163 / CEA10) (Neosartorya fumigata).